A 434-amino-acid chain; its full sequence is MSIITDVYAREVLDSRGNPTLEVEVYTESGAFGRGMVPSGASTGEHEAVELRDGDKSRYGGLGTQKAVDNVNNIIAEAIIGYDVRDQQAIDRAMIALDGTPNKGKLGANAILGVSIAVARAAADYLEIPLYSYLGGFNTKVLPTPMMNIINGGSHSDAPIAFQEFMILPVGAPTFKEALRYGAEIFHALKKILKSRGLETAVGDEGGFAPRFEGTEDGVETILAAIEAAGYVPGKDVFIGFDCASSEFYDKERKVYDYTKFEGEGAAVRTSAEQIDYLEELVNKYPIITIEDGMDENDWDGWKALTERLGKKVQLVGDDFFVTNTDYLARGIQEGAANSILIKVNQIGTLTETFEAIEMAKEAGYTAVVSHRSGETEDSTIADIAVATNAGQIKTGSLSRTDRIAKYNQLLRIEDQLGEVAEYRGLKSFYNLKK.

Residue Q163 participates in (2R)-2-phosphoglycerate binding. E205 functions as the Proton donor in the catalytic mechanism. Mg(2+) is bound by residues D242, E291, and D318. (2R)-2-phosphoglycerate is bound by residues K343, R372, S373, and K394. K343 serves as the catalytic Proton acceptor.

This sequence belongs to the enolase family. Mg(2+) is required as a cofactor.

It localises to the cytoplasm. It is found in the secreted. Its subcellular location is the cell surface. It catalyses the reaction (2R)-2-phosphoglycerate = phosphoenolpyruvate + H2O. The protein operates within carbohydrate degradation; glycolysis; pyruvate from D-glyceraldehyde 3-phosphate: step 4/5. Functionally, catalyzes the reversible conversion of 2-phosphoglycerate (2-PG) into phosphoenolpyruvate (PEP). It is essential for the degradation of carbohydrates via glycolysis. The polypeptide is Enolase (Streptococcus pneumoniae serotype 19F (strain G54)).